The following is a 93-amino-acid chain: Photosystem I iron-sulfur center (93 aa).

2 4Fe-4S ferredoxin-type domains span residues 13-43 (KDHE…MVPS) and 50-80 (QVVT…IRVY). The [4Fe-4S] cluster site is built by Cys-23, Cys-26, Cys-29, Cys-33, Cys-60, Cys-63, Cys-66, and Cys-70.

As to quaternary structure, the eukaryotic PSI reaction center is composed of at least 11 subunits. It depends on [4Fe-4S] cluster as a cofactor.

Its subcellular location is the plastid. It localises to the chloroplast thylakoid membrane. It carries out the reaction reduced [plastocyanin] + hnu + oxidized [2Fe-2S]-[ferredoxin] = oxidized [plastocyanin] + reduced [2Fe-2S]-[ferredoxin]. Functionally, apoprotein for the two 4Fe-4S centers FA and FB of photosystem I (PSI); essential for photochemical activity. FB is the terminal electron acceptor of PSI, donating electrons to ferredoxin. The C-terminus interacts with PsaA/B/D and helps assemble the protein into the PSI complex. Required for binding of PsaD and PsaE to PSI. PSI is a plastocyanin-ferredoxin oxidoreductase, converting photonic excitation into a charge separation, which transfers an electron from the donor P700 chlorophyll pair to the spectroscopically characterized acceptors A0, A1, FX, FA and FB in turn. The polypeptide is Photosystem I iron-sulfur center (Bigelowiella natans (Pedinomonas minutissima)).